A 433-amino-acid polypeptide reads, in one-letter code: Glutamate-1-semialdehyde 2,1-aminomutase (433 aa).

Lys-273 bears the N6-(pyridoxal phosphate)lysine mark.

It belongs to the class-III pyridoxal-phosphate-dependent aminotransferase family. HemL subfamily. As to quaternary structure, homodimer. Requires pyridoxal 5'-phosphate as cofactor.

It is found in the cytoplasm. The enzyme catalyses (S)-4-amino-5-oxopentanoate = 5-aminolevulinate. It participates in porphyrin-containing compound metabolism; protoporphyrin-IX biosynthesis; 5-aminolevulinate from L-glutamyl-tRNA(Glu): step 2/2. The chain is Glutamate-1-semialdehyde 2,1-aminomutase from Ralstonia pickettii (strain 12J).